The chain runs to 224 residues: PKHD-type hydroxylase HNE_1625 (224 aa).

A Fe2OG dioxygenase domain is found at Lys77–Ser175. Fe cation-binding residues include His95, Asp97, and His156. Arg166 is a 2-oxoglutarate binding site.

It depends on Fe(2+) as a cofactor. L-ascorbate serves as cofactor.

This Hyphomonas neptunium (strain ATCC 15444) protein is PKHD-type hydroxylase HNE_1625.